Here is a 115-residue protein sequence, read N- to C-terminus: Hydrogenase maturation factor HypA (115 aa).

Position 2 (H2) interacts with Ni(2+). C73, C76, C89, and C92 together coordinate Zn(2+).

It belongs to the HypA/HybF family.

Functionally, involved in the maturation of [NiFe] hydrogenases. Required for nickel insertion into the metal center of the hydrogenase. The polypeptide is Hydrogenase maturation factor HypA (Aquifex aeolicus (strain VF5)).